Reading from the N-terminus, the 739-residue chain is Polyphosphate kinase (739 aa).

Residues 22-45 are disordered; the sequence is WHSDNSALAAPPAATTSASQDQLP. A compositionally biased stretch (low complexity) spans 27-40; the sequence is SALAAPPAATTSAS. N87 serves as a coordination point for ATP. Mg(2+)-binding residues include R428 and R458. The active-site Phosphohistidine intermediate is H488. 3 residues coordinate ATP: Y521, R621, and H649. Residues 714–739 are disordered; it reads QWTASPQKGQQVRDHQESLMERHRSR. Positions 724-739 are enriched in basic and acidic residues; that stretch reads QVRDHQESLMERHRSR.

It belongs to the polyphosphate kinase 1 (PPK1) family. It depends on Mg(2+) as a cofactor. Post-translationally, an intermediate of this reaction is the autophosphorylated ppk in which a phosphate is covalently linked to a histidine residue through a N-P bond.

The catalysed reaction is [phosphate](n) + ATP = [phosphate](n+1) + ADP. Its function is as follows. Catalyzes the reversible transfer of the terminal phosphate of ATP to form a long-chain polyphosphate (polyP). In Mycobacterium leprae (strain TN), this protein is Polyphosphate kinase.